Consider the following 535-residue polypeptide: Putative subtilisin-like proteinase 2 (535 aa).

Positions 1–17 (MFFVGVAVLAALQSVWG) are cleaved as a signal peptide. The Peptidase S8 domain occupies 221–475 (NWIFRVLQIK…IPRLGCKGRI (255 aa)). Residues aspartate 255 and histidine 277 each act as charge relay system in the active site. Cysteines 369 and 400 form a disulfide. The active-site Charge relay system is the serine 420. A helical transmembrane segment spans residues 489-509 (IVPLVFVVLITSALLYLLLIG).

Belongs to the peptidase S8 family.

It is found in the membrane. May be involved in the degradation of proteins for nutrient acquisition or possess a regulatory function by proteolytic activation of proproteins. The sequence is that of Putative subtilisin-like proteinase 2 (SPL2) from Encephalitozoon cuniculi (strain GB-M1) (Microsporidian parasite).